A 100-amino-acid polypeptide reads, in one-letter code: C-X-C motif chemokine 2 (100 aa).

The N-terminal stretch at Met1 to Gly27 is a signal peptide. Intrachain disulfides connect Cys36/Cys62 and Cys38/Cys78.

It belongs to the intercrine alpha (chemokine CxC) family. In terms of assembly, homotetramer.

The protein localises to the secreted. Functionally, chemotactic for human polymorphonuclear leukocytes but does not induce chemokinesis or an oxidative burst. In Mus musculus (Mouse), this protein is C-X-C motif chemokine 2 (Cxcl2).